The primary structure comprises 314 residues: Small ribosomal subunit biogenesis GTPase RsgA (314 aa).

Residues 1–21 are disordered; the sequence is MKRAPTKQPAKPAARGGERAQ. The CP-type G domain maps to 85 to 246; it reads SDQFKSKLFA…LIDSPGFQEF (162 aa). GTP is bound by residues 134–137 and 188–196; these read NKID and GQSGMGKST. Residues Cys-270, Cys-275, His-277, and Cys-283 each coordinate Zn(2+).

Belongs to the TRAFAC class YlqF/YawG GTPase family. RsgA subfamily. In terms of assembly, monomer. Associates with 30S ribosomal subunit, binds 16S rRNA. The cofactor is Zn(2+).

The protein localises to the cytoplasm. Its function is as follows. One of several proteins that assist in the late maturation steps of the functional core of the 30S ribosomal subunit. Helps release RbfA from mature subunits. May play a role in the assembly of ribosomal proteins into the subunit. Circularly permuted GTPase that catalyzes slow GTP hydrolysis, GTPase activity is stimulated by the 30S ribosomal subunit. The protein is Small ribosomal subunit biogenesis GTPase RsgA of Burkholderia pseudomallei (strain 1710b).